The chain runs to 397 residues: Phosphoglycerate kinase (397 aa).

Substrate contacts are provided by residues 21–23, arginine 36, 59–62, arginine 118, and arginine 151; these read DFN and HLGR. ATP contacts are provided by residues lysine 202, glycine 293, glutamate 324, and 353–356; that span reads GGDS.

It belongs to the phosphoglycerate kinase family. As to quaternary structure, monomer.

Its subcellular location is the cytoplasm. The enzyme catalyses (2R)-3-phosphoglycerate + ATP = (2R)-3-phospho-glyceroyl phosphate + ADP. Its pathway is carbohydrate degradation; glycolysis; pyruvate from D-glyceraldehyde 3-phosphate: step 2/5. In Chloroherpeton thalassium (strain ATCC 35110 / GB-78), this protein is Phosphoglycerate kinase.